The sequence spans 863 residues: Chloride channel protein A (863 aa).

Topologically, residues 1–124 (MFRNNNNDNN…TSKLNHMLKT (124 aa)) are cytoplasmic. The disordered stretch occupies residues 48 to 78 (ENGLINNNNNSHNNNNGGNNNNHGPSKVTHR). Over residues 49–71 (NGLINNNNNSHNNNNGGNNNNHG) the composition is skewed to low complexity. A run of 7 helical transmembrane segments spans residues 125-145 (FGKW…AYLV), 171-191 (IAFL…SLVI), 228-248 (LVSL…GPMI), 289-309 (GAAA…LFGF), 324-344 (TFFA…GFDM), 367-387 (LIPF…FVNL), and 408-428 (VLEV…CAAF). The segment at 434–460 (KTQANGSQTNSLDTSSSSILSSSGDNS) is disordered. Low complexity predominate over residues 439–460 (GSQTNSLDTSSSSILSSSGDNS). Transmembrane regions (helical) follow at residues 518–538 (IFTI…TTIT), 539–559 (SGLM…ATFG), and 561–581 (LVGQ…ALVG). CBS domains follow at residues 661-742 (MKTE…CHEQ) and 816-863 (MNLS…KDLL).

This sequence belongs to the chloride channel (TC 2.A.49) family.

It localises to the membrane. Functionally, voltage-gated chloride channel. Chloride channels may have several functions including the regulation of cell volume, membrane potential stabilization and signal transduction. This is Chloride channel protein A (clcA) from Dictyostelium discoideum (Social amoeba).